The primary structure comprises 137 residues: MAGVWKVLVVLVGLAVVACAIPRRRLRYEEVVAQALQFYNEGQQGQPLFRLLEATPPPSLNSKSRIPLNFRIKETVCIFTLDRQPGNCAFREGGEERICRGAFVRRRWVRALTLRCDRDQRRQPEFPRVTRPAGPTA.

Residues 1 to 20 form the signal peptide; that stretch reads MAGVWKVLVVLVGLAVVACA. Cystine bridges form between cysteine 77–cysteine 88 and cysteine 99–cysteine 116.

The protein belongs to the cathelicidin family. Large granules of neutrophils.

Its subcellular location is the secreted. In terms of biological role, binds to bacterial lipopolysaccharides (LPS), potentiates strongly the early antibacterial effects of BPI. Inhibits the late lethal action of BPI. The chain is 15 kDa protein A from Oryctolagus cuniculus (Rabbit).